The chain runs to 348 residues: uncharacterized protein (348 aa).

Pro residues predominate over residues 1-11; sequence MTNPQGPPNDP. The interval 1-83 is disordered; it reads MTNPQGPPND…RSGRQAAHQA (83 aa). A run of 2 helical transmembrane segments spans residues 111 to 131 and 235 to 255; these read LTVF…LIGG and IPIL…DGTV.

The protein localises to the cell membrane. This is an uncharacterized protein from Mycobacterium tuberculosis (strain CDC 1551 / Oshkosh).